Consider the following 127-residue polypeptide: Large ribosomal subunit protein eL8 (127 aa).

Belongs to the eukaryotic ribosomal protein eL8 family. In terms of assembly, part of the 50S ribosomal subunit. Probably part of the RNase P complex.

The protein localises to the cytoplasm. Functionally, multifunctional RNA-binding protein that recognizes the K-turn motif in ribosomal RNA, the RNA component of RNase P, box H/ACA, box C/D and box C'/D' sRNAs. This Hyperthermus butylicus (strain DSM 5456 / JCM 9403 / PLM1-5) protein is Large ribosomal subunit protein eL8.